The primary structure comprises 320 residues: Pyrroline-5-carboxylate reductase 1, mitochondrial (320 aa).

The residue at position 2 (S2) is an N-acetylserine. Residues 6–11 (IGAGQL) and S34 contribute to the NADP(+) site. Residues A8, Q10, L11, S34, D36, N56, V70, K71, and A97 each coordinate NADPH. Residues N56, 69-72 (AVKP), and 95-97 (CAA) each bind NADP(+). Residue E164 coordinates L-proline. NADPH is bound at residue N230. A237 and T238 together coordinate L-proline. S278 bears the Phosphoserine mark. The interval 292–320 (LDSPPGTSLAPSGHSKLLPRSMAPAGKQD) is disordered.

The protein belongs to the pyrroline-5-carboxylate reductase family. In terms of assembly, homodecamer; composed of 5 homodimers. Interacts with LTO1.

The protein resides in the mitochondrion. It carries out the reaction L-proline + NADP(+) = (S)-1-pyrroline-5-carboxylate + NADPH + 2 H(+). The catalysed reaction is L-proline + NAD(+) = (S)-1-pyrroline-5-carboxylate + NADH + 2 H(+). It participates in amino-acid biosynthesis; L-proline biosynthesis; L-proline from L-glutamate 5-semialdehyde: step 1/1. Oxidoreductase that catalyzes the last step in proline biosynthesis, which corresponds to the reduction of pyrroline-5-carboxylate to L-proline using NAD(P)H. At physiologic concentrations, has higher specific activity in the presence of NADH. Involved in the cellular response to oxidative stress. In Bos taurus (Bovine), this protein is Pyrroline-5-carboxylate reductase 1, mitochondrial (PYCR1).